The sequence spans 97 residues: Theromacin (97 aa).

Positions 1-22 are cleaved as a signal peptide; sequence MELKSGLSILLCFGICIAVINA. Intrachain disulfides connect Cys-24–Cys-31, Cys-46–Cys-50, Cys-53–Cys-95, Cys-61–Cys-69, and Cys-79–Cys-81.

As to expression, coelomic liquid (at protein level). Expressed in large fat cells in contact with coelomic cavities, in intestinal epithelia and at the epidermis level.

Its subcellular location is the secreted. Functionally, has a bactericidal activity. Active against M.luteus. No activity toward E.coli and F.oxysporum. The sequence is that of Theromacin from Theromyzon tessulatum (Duck leech).